The following is a 453-amino-acid chain: Ribosomal protein uS12 methylthiotransferase RimO (453 aa).

In terms of domain architecture, MTTase N-terminal spans 6-116; sequence PTVGIVSLGC…VLTAVHEAIA (111 aa). Cys15, Cys51, Cys80, Cys148, Cys152, and Cys155 together coordinate [4Fe-4S] cluster. The Radical SAM core domain maps to 134–371; that stretch reads LTPKHFAYLK…MQLQQQISAN (238 aa). The TRAM domain maps to 374 to 440; that stretch reads QAKIGKTIQV…EYDLWATPVG (67 aa).

This sequence belongs to the methylthiotransferase family. RimO subfamily. The cofactor is [4Fe-4S] cluster.

It localises to the cytoplasm. The enzyme catalyses L-aspartate(89)-[ribosomal protein uS12]-hydrogen + (sulfur carrier)-SH + AH2 + 2 S-adenosyl-L-methionine = 3-methylsulfanyl-L-aspartate(89)-[ribosomal protein uS12]-hydrogen + (sulfur carrier)-H + 5'-deoxyadenosine + L-methionine + A + S-adenosyl-L-homocysteine + 2 H(+). In terms of biological role, catalyzes the methylthiolation of an aspartic acid residue of ribosomal protein uS12. The chain is Ribosomal protein uS12 methylthiotransferase RimO from Hydrogenovibrio crunogenus (strain DSM 25203 / XCL-2) (Thiomicrospira crunogena).